A 505-amino-acid chain; its full sequence is Cell division control protein 6 homolog B (505 aa).

The segment at 37-72 (KRKMRSDSAAVSGNSVSTPKKLKSHLPSSVPNPGMS) is disordered. Polar residues predominate over residues 45–54 (AAVSGNSVST).

The protein belongs to the CDC6/cdc18 family.

Its subcellular location is the nucleus. Its function is as follows. May be involved in the initiation of DNA replication. In Arabidopsis thaliana (Mouse-ear cress), this protein is Cell division control protein 6 homolog B.